Reading from the N-terminus, the 230-residue chain is Heptaprenylglyceryl phosphate synthase (230 aa).

Lys12 provides a ligand contact to sn-glycerol 1-phosphate. Mg(2+)-binding residues include Asp14 and Thr40. Residues 159–164 (YVEYSG), Gly189, and 209–210 (GD) each bind sn-glycerol 1-phosphate.

The protein belongs to the GGGP/HepGP synthase family. Group I subfamily. Homodimer. It depends on Mg(2+) as a cofactor.

It carries out the reaction sn-glycerol 1-phosphate + all-trans-heptaprenyl diphosphate = 3-heptaprenyl-sn-glycero-1-phosphate + diphosphate. It participates in membrane lipid metabolism; glycerophospholipid metabolism. Prenyltransferase that catalyzes in vivo the transfer of the heptaprenyl moiety of heptaprenyl pyrophosphate (HepPP; 35 carbon atoms) to the C3 hydroxyl of sn-glycerol-1-phosphate (G1P), producing heptaprenylglyceryl phosphate (HepGP). This reaction is an ether-bond-formation step in the biosynthesis of archaea-type G1P-based membrane lipids found in Bacillales. The chain is Heptaprenylglyceryl phosphate synthase from Staphylococcus epidermidis (strain ATCC 35984 / DSM 28319 / BCRC 17069 / CCUG 31568 / BM 3577 / RP62A).